Here is a 431-residue protein sequence, read N- to C-terminus: Enolase (431 aa).

Gln-163 is a (2R)-2-phosphoglycerate binding site. Glu-205 serves as the catalytic Proton donor. 3 residues coordinate Mg(2+): Asp-242, Glu-288, and Asp-315. Residues Lys-340, Arg-369, Ser-370, and Lys-391 each coordinate (2R)-2-phosphoglycerate. Lys-340 (proton acceptor) is an active-site residue.

This sequence belongs to the enolase family. Requires Mg(2+) as cofactor.

It localises to the cytoplasm. The protein localises to the secreted. Its subcellular location is the cell surface. The catalysed reaction is (2R)-2-phosphoglycerate = phosphoenolpyruvate + H2O. It functions in the pathway carbohydrate degradation; glycolysis; pyruvate from D-glyceraldehyde 3-phosphate: step 4/5. Functionally, catalyzes the reversible conversion of 2-phosphoglycerate (2-PG) into phosphoenolpyruvate (PEP). It is essential for the degradation of carbohydrates via glycolysis. In Trichlorobacter lovleyi (strain ATCC BAA-1151 / DSM 17278 / SZ) (Geobacter lovleyi), this protein is Enolase.